Here is a 544-residue protein sequence, read N- to C-terminus: Chaperonin GroEL (544 aa).

ATP contacts are provided by residues threonine 30–proline 33, lysine 51, aspartate 87–threonine 91, glycine 415, asparagine 479–alanine 481, and aspartate 495.

The protein belongs to the chaperonin (HSP60) family. In terms of assembly, forms a cylinder of 14 subunits composed of two heptameric rings stacked back-to-back. Interacts with the co-chaperonin GroES.

Its subcellular location is the cytoplasm. The enzyme catalyses ATP + H2O + a folded polypeptide = ADP + phosphate + an unfolded polypeptide.. Its function is as follows. Together with its co-chaperonin GroES, plays an essential role in assisting protein folding. The GroEL-GroES system forms a nano-cage that allows encapsulation of the non-native substrate proteins and provides a physical environment optimized to promote and accelerate protein folding. The polypeptide is Chaperonin GroEL (Francisella tularensis subsp. novicida (strain U112)).